A 90-amino-acid polypeptide reads, in one-letter code: U7-theraphotoxin-Hhn1a 2 (90 aa).

The N-terminal stretch at 1 to 19 (MKIAIFTVVLALAVFAVLS) is a signal peptide. Residues 20–50 (FGWEANEKALSEEFTELIHEKEAASETEARE) constitute a propeptide that is removed on maturation. 3 disulfides stabilise this stretch: C51–C65, C58–C70, and C64–C81.

Belongs to the neurotoxin 10 (Hwtx-1) family. 13 (Hntx-13) subfamily. In terms of tissue distribution, expressed by the venom gland.

Its subcellular location is the secreted. In terms of biological role, ion channel inhibitor. The protein is U7-theraphotoxin-Hhn1a 2 of Cyriopagopus hainanus (Chinese bird spider).